Consider the following 146-residue polypeptide: Anti-sigma F factor (146 aa).

The protein belongs to the anti-sigma-factor family.

The catalysed reaction is L-seryl-[protein] + ATP = O-phospho-L-seryl-[protein] + ADP + H(+). The enzyme catalyses L-threonyl-[protein] + ATP = O-phospho-L-threonyl-[protein] + ADP + H(+). Functionally, binds to sigma F and blocks its ability to form an RNA polymerase holoenzyme (E-sigma F). Phosphorylates SpoIIAA on a serine residue. This phosphorylation may enable SpoIIAA to act as an anti-anti-sigma factor that counteracts SpoIIAB and thus releases sigma F from inhibition. This is Anti-sigma F factor from Bacillus anthracis (strain A0248).